The sequence spans 509 residues: Probable cytosol aminopeptidase (509 aa).

Residues K277 and D282 each contribute to the Mn(2+) site. The active site involves K289. The Mn(2+) site is built by D300, D359, and E361. The active site involves R363.

It belongs to the peptidase M17 family. Requires Mn(2+) as cofactor.

The protein localises to the cytoplasm. It catalyses the reaction Release of an N-terminal amino acid, Xaa-|-Yaa-, in which Xaa is preferably Leu, but may be other amino acids including Pro although not Arg or Lys, and Yaa may be Pro. Amino acid amides and methyl esters are also readily hydrolyzed, but rates on arylamides are exceedingly low.. It carries out the reaction Release of an N-terminal amino acid, preferentially leucine, but not glutamic or aspartic acids.. In terms of biological role, presumably involved in the processing and regular turnover of intracellular proteins. Catalyzes the removal of unsubstituted N-terminal amino acids from various peptides. The sequence is that of Probable cytosol aminopeptidase from Chloroherpeton thalassium (strain ATCC 35110 / GB-78).